Here is a 386-residue protein sequence, read N- to C-terminus: Patatin-15 (386 aa).

A signal peptide spans 1–23; the sequence is MATTKSFLILFFMILATTSSTCA. Residues 32 to 229 enclose the PNPLA domain; it reads LSIDGGGIKG…TVGDPALLSL (198 aa). Residues 36–41 carry the GXGXXG motif; it reads GGGIKG. Positions 75-79 match the GXSXG motif; it reads GTSTG. The active-site Nucleophile is Ser-77. A glycan (N-linked (GlcNAc...) asparagine) is linked at Asn-115. Catalysis depends on Asp-215, which acts as the Proton acceptor. The short motif at 215–217 is the DGA/G element; the sequence is DGG. A coiled-coil region spans residues 321 to 384; it reads ENALTGTTTE…DRKKLRANKA (64 aa).

The protein belongs to the patatin family. Tuber.

It localises to the vacuole. In terms of biological role, probable lipolytic acyl hydrolase (LAH), an activity which is thought to be involved in the response of tubers to pathogens. The protein is Patatin-15 of Solanum tuberosum (Potato).